Consider the following 134-residue polypeptide: Ribosome-binding factor A (134 aa).

The protein belongs to the RbfA family. In terms of assembly, monomer. Binds 30S ribosomal subunits, but not 50S ribosomal subunits or 70S ribosomes.

It localises to the cytoplasm. Functionally, one of several proteins that assist in the late maturation steps of the functional core of the 30S ribosomal subunit. Associates with free 30S ribosomal subunits (but not with 30S subunits that are part of 70S ribosomes or polysomes). Required for efficient processing of 16S rRNA. May interact with the 5'-terminal helix region of 16S rRNA. The sequence is that of Ribosome-binding factor A from Synechococcus sp. (strain CC9311).